Consider the following 572-residue polypeptide: Dihydroxy-acid dehydratase (572 aa).

Cysteine 54 is a [2Fe-2S] cluster binding site. Aspartate 86 lines the Mg(2+) pocket. Cysteine 127 is a binding site for [2Fe-2S] cluster. Mg(2+) is bound by residues aspartate 128 and lysine 129. At lysine 129 the chain carries N6-carboxylysine. A [2Fe-2S] cluster-binding site is contributed by cysteine 199. Glutamate 449 provides a ligand contact to Mg(2+). Serine 475 functions as the Proton acceptor in the catalytic mechanism.

The protein belongs to the IlvD/Edd family. Homodimer. It depends on [2Fe-2S] cluster as a cofactor. The cofactor is Mg(2+).

The enzyme catalyses (2R)-2,3-dihydroxy-3-methylbutanoate = 3-methyl-2-oxobutanoate + H2O. It carries out the reaction (2R,3R)-2,3-dihydroxy-3-methylpentanoate = (S)-3-methyl-2-oxopentanoate + H2O. Its pathway is amino-acid biosynthesis; L-isoleucine biosynthesis; L-isoleucine from 2-oxobutanoate: step 3/4. The protein operates within amino-acid biosynthesis; L-valine biosynthesis; L-valine from pyruvate: step 3/4. Functionally, functions in the biosynthesis of branched-chain amino acids. Catalyzes the dehydration of (2R,3R)-2,3-dihydroxy-3-methylpentanoate (2,3-dihydroxy-3-methylvalerate) into 2-oxo-3-methylpentanoate (2-oxo-3-methylvalerate) and of (2R)-2,3-dihydroxy-3-methylbutanoate (2,3-dihydroxyisovalerate) into 2-oxo-3-methylbutanoate (2-oxoisovalerate), the penultimate precursor to L-isoleucine and L-valine, respectively. The protein is Dihydroxy-acid dehydratase of Pelagibacter ubique (strain HTCC1062).